We begin with the raw amino-acid sequence, 1872 residues long: E3 ubiquitin-protein ligase UBR2 (1872 aa).

A UBR-type zinc finger spans residues 96 to 172; the sequence is TACTRLCFPS…DAFKCKNELN (77 aa). Residue lysine 709 forms a Glycyl lysine isopeptide (Lys-Gly) (interchain with G-Cter in ubiquitin) linkage. The tract at residues 1134–1240 is interaction with UBC2; that stretch reads RYLMETAPHV…SSNTINSCCD (107 aa). The disordered stretch occupies residues 1203 to 1227; sequence NNSVDTSDISTPRTTSPSLSPTRIN. Positions 1212 to 1225 are enriched in low complexity; the sequence is STPRTTSPSLSPTR. 2 positions are modified to phosphoserine: serine 1218 and serine 1222. The RING-type; atypical zinc finger occupies 1241–1362; the sequence is DDCVFCKMPK…GLIYCPVCNS (122 aa).

Belongs to the E3 ubiquitin-protein ligase UBR1-like family. In terms of assembly, interacts with MUB1, RPN4 and UBC2.

The protein resides in the cytoplasm. It catalyses the reaction S-ubiquitinyl-[E2 ubiquitin-conjugating enzyme]-L-cysteine + [acceptor protein]-L-lysine = [E2 ubiquitin-conjugating enzyme]-L-cysteine + N(6)-ubiquitinyl-[acceptor protein]-L-lysine.. The protein operates within protein modification; protein ubiquitination. E3 ubiquitin-protein ligase which probably functions outside the N-end rule pathway, since it lacks the residues essential for the degradation of N-end rule substrates. Mediates RPN4 ubiquitination and subsequent degradation. This is E3 ubiquitin-protein ligase UBR2 (UBR2) from Saccharomyces cerevisiae (strain ATCC 204508 / S288c) (Baker's yeast).